A 73-amino-acid polypeptide reads, in one-letter code: Translation initiation factor IF-1 (73 aa).

Positions 1 to 73 (MAKKEDTIVL…TKARVVYRHR (73 aa)) constitute an S1-like domain.

It belongs to the IF-1 family. Component of the 30S ribosomal translation pre-initiation complex which assembles on the 30S ribosome in the order IF-2 and IF-3, IF-1 and N-formylmethionyl-tRNA(fMet); mRNA recruitment can occur at any time during PIC assembly.

It is found in the cytoplasm. Its function is as follows. One of the essential components for the initiation of protein synthesis. Stabilizes the binding of IF-2 and IF-3 on the 30S subunit to which N-formylmethionyl-tRNA(fMet) subsequently binds. Helps modulate mRNA selection, yielding the 30S pre-initiation complex (PIC). Upon addition of the 50S ribosomal subunit IF-1, IF-2 and IF-3 are released leaving the mature 70S translation initiation complex. The protein is Translation initiation factor IF-1 of Chlamydia caviae (strain ATCC VR-813 / DSM 19441 / 03DC25 / GPIC) (Chlamydophila caviae).